Here is a 226-residue protein sequence, read N- to C-terminus: 8-oxoguanine DNA glycosylase/AP lyase (226 aa).

Active-site residues include Lys149 and Asp167.

Belongs to the type-2 OGG1 family.

It catalyses the reaction 2'-deoxyribonucleotide-(2'-deoxyribose 5'-phosphate)-2'-deoxyribonucleotide-DNA = a 3'-end 2'-deoxyribonucleotide-(2,3-dehydro-2,3-deoxyribose 5'-phosphate)-DNA + a 5'-end 5'-phospho-2'-deoxyribonucleoside-DNA + H(+). Catalyzes the excision of an oxidatively damaged form of guanine (7,8-dihydro-8-oxoguanine = 8-oxoG) from DNA. Also cleaves the DNA backbone at apurinic/apyrimidinic sites (AP sites). In Aquifex aeolicus (strain VF5), this protein is 8-oxoguanine DNA glycosylase/AP lyase.